A 201-amino-acid polypeptide reads, in one-letter code: Anthranilate synthase component 2 (201 aa).

The region spanning 1–199 (MLLMIDNYDS…LRQQGGVRGE (199 aa)) is the Glutamine amidotransferase type-1 domain. 52 to 54 (GPC) lines the L-glutamine pocket. The Nucleophile; for GATase activity role is filled by C79. L-glutamine-binding positions include Q83 and 129–130 (SL). Active-site for GATase activity residues include H173 and E175.

In terms of assembly, heterotetramer consisting of two non-identical subunits: a beta subunit (TrpG) and a large alpha subunit (TrpE).

The enzyme catalyses chorismate + L-glutamine = anthranilate + pyruvate + L-glutamate + H(+). Its pathway is amino-acid biosynthesis; L-tryptophan biosynthesis; L-tryptophan from chorismate: step 1/5. In terms of biological role, part of a heterotetrameric complex that catalyzes the two-step biosynthesis of anthranilate, an intermediate in the biosynthesis of L-tryptophan. In the first step, the glutamine-binding beta subunit (TrpG) of anthranilate synthase (AS) provides the glutamine amidotransferase activity which generates ammonia as a substrate that, along with chorismate, is used in the second step, catalyzed by the large alpha subunit of AS (TrpE) to produce anthranilate. In the absence of TrpG, TrpE can synthesize anthranilate directly from chorismate and high concentrations of ammonia. This is Anthranilate synthase component 2 from Pseudomonas aeruginosa (strain ATCC 15692 / DSM 22644 / CIP 104116 / JCM 14847 / LMG 12228 / 1C / PRS 101 / PAO1).